Reading from the N-terminus, the 303-residue chain is Thioesterase poxG (303 aa).

This sequence belongs to the lcsJ thioesterase family.

The protein operates within secondary metabolite biosynthesis. Thioesterase; part of the gene cluster that mediates the biosynthesis of oxaleimides, cytotoxic compounds containing an unusual disubstituted succinimide moiety. The first step of the pathway is provided by the HR-PKS poxF that serves in a new mode of collaborative biosynthesis with the PKS-NRPS poxE, by providing the olefin containing amino acid substrate via the synthesis of an ACP-bound dec-4-enoate. The cytochrome P450 monooxygenase poxM-catalyzed oxidation at the alpha-position creates the enzyme-bound 2-hydroxydec-4-enoyl-ACP thioester, which may be prone to spontaneous hydrolysis to yield 2-hydroxydec-4-enoic acid due to increased electrophilicity of the carbonyl. 2-hydroxydec-4-enoic acid can then be further oxidized by poxM to yield the alpha-ketoacid 2-oxodec-4-enoicacid, which is reductively aminated by the aminotransferase poxL to yield (S,E)-2-aminodec-4-enoic acid. The Hybrid PKS-NRPS synthetase poxE then performs condensation between the octaketide product of its PKS modules and the amino group of (S,E)-2-aminodec-4-enoic acid which is activated and incorporated by the adenylation domain. The resulting aminoacyl product can be cyclized by the Diels-Alderase PoxQ and reductively released by the reductive (R) domain of poxE to yield an aldehyde intermediate. The released aldehyde is then substrate for a Knoevenagel condensation by the hydrolyase poxO followed by an oxidation at the 5-position of the pyrrolidone ring. The presence of the olefin from the amino acid building block allows for migration of the substituted allyl group to occur. This allylic transposition reaction takes place in a conjugate addition, semipinacol-like fashion to yield a succinimide intermediate. Iterative two-electron oxidations of the C7 methyl of the succinimide intermediate to the carboxylic acid can be catalyzed by one of two remaining cytochrome P450 monooxygenasess poxC or poxD to yield oxaleimide A. Subsequent oxidation yields the maleimide scaffold oxaleimide I. Both oxaleimide A and oxaleimide I can undergo oxidative modifications in the decalin ring to yield the series of products oxaleimides B to H. The protein is Thioesterase poxG of Penicillium oxalicum.